A 350-amino-acid polypeptide reads, in one-letter code: Hepatocyte nuclear factor 3-gamma (350 aa).

The fork-head DNA-binding region spans 116 to 207 (AKPPYSYISL…GNMFENGCYL (92 aa)). A disordered region spans residues 217-276 (EKVKKGGSGAATTTRNGTGSAASTTTPAATVTSPPQPPPPAPEPEAQGGEDVGALDCGSP). Residues 226–249 (AATTTRNGTGSAASTTTPAATVTS) show a composition bias toward low complexity. Positions 250-259 (PPQPPPPAPE) are enriched in pro residues.

In terms of assembly, interacts with FOXA2. Expressed in erythroleukemia and hepatoma cell lines and in liver and pancreas. Not expressed in any other cell lines or tissues examined.

The protein resides in the nucleus. Transcription factor that is thought to act as a 'pioneer' factor opening the compacted chromatin for other proteins through interactions with nucleosomal core histones and thereby replacing linker histones at target enhancer and/or promoter sites. Originally described as a transcription activator for a number of liver genes such as AFP, albumin, tyrosine aminotransferase, PEPCK, etc. Interacts with the cis-acting regulatory regions of these genes. Involved in glucose homeostasis; binds to and activates transcription from the G6PC1 promoter. Binds to the CYP3A4 promoter and activates its transcription in cooperation with CEBPA. Binds to the CYP3A7 promoter together with members of the CTF/NF-I family. Involved in regulation of neuronal-specific transcription. May be involved in regulation of spermatogenesis. The chain is Hepatocyte nuclear factor 3-gamma (FOXA3) from Homo sapiens (Human).